Consider the following 519-residue polypeptide: Aspartokinase (519 aa).

Ser326 is subject to Phosphoserine. Thr328 is modified (phosphothreonine). The ACT domain maps to Leu436–Ser518.

The protein belongs to the aspartokinase family.

The enzyme catalyses L-aspartate + ATP = 4-phospho-L-aspartate + ADP. Its pathway is amino-acid biosynthesis; L-methionine biosynthesis via de novo pathway; L-homoserine from L-aspartate: step 1/3. It functions in the pathway amino-acid biosynthesis; L-threonine biosynthesis; L-threonine from L-aspartate: step 1/5. Its function is as follows. Phosphorylates aspartate, the first step in the biosynthesis of amino acids that derive from aspartate (the aspartate family of amino acids), including methioinine and threonine, the latter of which is a precursor to isoleucine. The sequence is that of Aspartokinase from Schizosaccharomyces pombe (strain 972 / ATCC 24843) (Fission yeast).